The chain runs to 530 residues: Tetrahydroberberine oxidase (530 aa).

A signal peptide spans 1–24; the sequence is MSKMASSIFATFSLLSSLLPTSLA. A disulfide bridge connects residues Cys36 and Cys94. A glycan (N-linked (GlcNAc...) asparagine) is linked at Asn51. An FAD-binding PCMH-type domain is found at 72–246; sequence TTPKPNFIVT…LAWKIRLVPV (175 aa). The segment at residues 109–171 is a cross-link (6-(S-cysteinyl)-8alpha-(pros-histidyl)-FAD (His-Cys)); sequence HDFEGLSYVS…GVHAFPAGLC (63 aa). Asn483 is a glycosylation site (N-linked (GlcNAc...) asparagine).

This sequence belongs to the oxygen-dependent FAD-linked oxidoreductase family. The cofactor is FAD. The FAD cofactor is bound via a bicovalent 6-S-cysteinyl, 8alpha-N1-histidyl FAD linkage.

The enzyme catalyses (S)-canadine + 2 O2 + H(+) = berberine + 2 H2O2. Functionally, catalyzes the oxidation of different tetrahydroprotoberberines, such as (S)-canadine, (S)-scoulerine and (S)-corypalmine. Catalyzes the oxidation of (S)-coreximine and (S)-tetrahydropalmatine. Catalyzes the oxidation of different 1-benzylisoquinoline alkaloids, such as (S)-norreticuline, (S)-nororientaline, (S)-coclaurine and (S)-norisoorientaline. Exhibits strict specificity for the (S)-enantiomer of tetrahydroprotoberbirines and 1-benzylisoquinoline alkaloids. This Berberis wilsoniae (Mrs Wilson's barberry) protein is Tetrahydroberberine oxidase.